Consider the following 145-residue polypeptide: Large ribosomal subunit protein uL13 (145 aa).

Belongs to the universal ribosomal protein uL13 family. Part of the 50S ribosomal subunit. Interacts weakly with proteins L3 and L6.

Its function is as follows. This protein is one of the early assembly proteins of the 50S ribosomal subunit. Binds to 23S rRNA. This Haloarcula marismortui (strain ATCC 43049 / DSM 3752 / JCM 8966 / VKM B-1809) (Halobacterium marismortui) protein is Large ribosomal subunit protein uL13.